We begin with the raw amino-acid sequence, 525 residues long: M-phase inducer phosphatase 1 (525 aa).

The segment at 1–42 is disordered; sequence MELGPEPPHRRRLLFTCSPTPAPQPTGKVQFGASRAGGLSPV. The short motif at 74 to 84 is the Phosphodegron element; the sequence is MGSSESTDSGF. Ser76 is subject to Phosphoserine; by CHEK1. A phosphoserine; by NEK11 mark is found at Ser79, Ser82, and Ser88. Ser124 is modified (phosphoserine; by CHEK1 and CHEK2). The short motif at 141–143 is the KEN box element; it reads KEN. Ser178 is subject to Phosphoserine; by CHEK1. A disordered region spans residues 260 to 318; the sequence is FDSPSPCSSTSSCSTRAVKRADRSHEESPRGTKRRKSSEASPVKADVPEPTQLPHQSLS. Positions 262 to 274 are enriched in low complexity; it reads SPSPCSSTSSCST. The span at 278–289 shows a compositional bias: basic and acidic residues; the sequence is KRADRSHEESPR. Residues Ser283 and Ser296 each carry the phosphoserine; by CHEK1 and CHEK2 modification. The Rhodanese domain occupies 377–483; the sequence is LIKEFVIIDC…FFLKCQSHCE (107 aa). The active site involves Cys432. A Phosphothreonine; by CHEK1 modification is found at Thr508. A phosphoserine; by PLK3 mark is found at Ser514 and Ser520.

This sequence belongs to the MPI phosphatase family. In terms of assembly, interacts with CCNB1/cyclin B1. Interacts with YWHAE/14-3-3 epsilon when phosphorylated. Interacts with CUL1 specifically when CUL1 is neddylated and active. Interacts with BTRC/BTRCP1 and FBXW11/BTRCP2. Interactions with CUL1, BTRC and FBXW11 are enhanced upon DNA damage. Interacts with CHEK2; mediates CDC25A phosphorylation and degradation in response to infrared-induced DNA damages. Interacts with HSP90AB1; prevents heat shock-mediated CDC25A degradation and contributes to cell cycle progression. In terms of processing, phosphorylated by CHEK1 on Ser-76, Ser-124, Ser-178, Ser-283, Ser-296 and Thr-508 during checkpoint mediated cell cycle arrest. Also phosphorylated by CHEK2 on Ser-124, Ser-283, and Ser-296 during checkpoint mediated cell cycle arrest. Phosphorylation on Ser-178 and Thr-508 creates binding sites for YWHAE/14-3-3 epsilon which inhibits CDC25A. Phosphorylation on Ser-76, Ser-124, Ser-178, Ser-283 and Ser-296 may also promote ubiquitin-dependent proteolysis of CDC25A by the SCF complex. Phosphorylation of CDC25A at Ser-76 by CHEK1 primes it for subsequent phosphorylation at Ser-79, Ser-82 and Ser-88 by NEK11. Phosphorylation by NEK11 is required for BTRC-mediated polyubiquitination and degradation. Phosphorylation by PIM1 leads to an increase in phosphatase activity. Phosphorylated by PLK3 following DNA damage, leading to promote its ubiquitination and degradation. Post-translationally, ubiquitinated by the anaphase promoting complex/cyclosome (APC/C) ubiquitin ligase complex that contains FZR1/CDH1 during G1 phase leading to its degradation by the proteasome. Ubiquitinated by a SCF complex containing BTRC and FBXW11 during S phase leading to its degradation by the proteasome. Deubiquitination by USP17L2/DUB3 leads to its stabilization.

It catalyses the reaction O-phospho-L-tyrosyl-[protein] + H2O = L-tyrosyl-[protein] + phosphate. Its activity is regulated as follows. Stimulated by B-type cyclins. Stimulated by PIM1-mediated phosphorylation. Functionally, tyrosine protein phosphatase which functions as a dosage-dependent inducer of mitotic progression. Directly dephosphorylates CDK1 and stimulates its kinase activity. Also dephosphorylates CDK2 in complex with cyclin-E, in vitro. This chain is M-phase inducer phosphatase 1 (Cdc25a), found in Rattus norvegicus (Rat).